The primary structure comprises 472 residues: Sarcalumenin (472 aa).

Positions 1-19 (MRALLLFCFVASLLLSGQA) are cleaved as a signal peptide. Residues 89-330 (ITSKPMVLFL…IENRLENKIA (242 aa)) enclose the Dynamin-type G domain. The G1 motif stretch occupies residues 99 to 106 (GPWSVGKS). N-linked (GlcNAc...) asparagine glycosylation is present at S102. The segment at 127 to 128 (EP) is G2 motif. The segment at 189-192 (DTPG) is G3 motif. The interval 254-257 (NKAD) is G4 motif. Residue P277 is a region of interest, G5 motif. Residues N280 and N388 are each glycosylated (N-linked (GlcNAc...) asparagine).

It belongs to the TRAFAC class dynamin-like GTPase superfamily. Dynamin/Fzo/YdjA family. Post-translationally, N-glycosylated. In terms of tissue distribution, detected in skeletal muscle.

The protein localises to the sarcoplasmic reticulum lumen. It is found in the sarcoplasmic reticulum membrane. This Oryctolagus cuniculus (Rabbit) protein is Sarcalumenin (SRL).